The chain runs to 1031 residues: Pre-mRNA-splicing factor SYF1 (1031 aa).

4 HAT repeats span residues 28–60 (HLIP…NVKE), 90–122 (DGLQ…TRQS), 214–248 (KNGS…WAEI), and 250–269 (GGDA…PSLT). The disordered stretch occupies residues 346–368 (VEEKVDGEQPQVEGQEQQPQEEP). Residues 353-368 (EQPQVEGQEQQPQEEP) show a composition bias toward low complexity. HAT repeat units lie at residues 452–487 (GEFE…FSET), 610–646 (PDLE…MELR), 664–698 (PKNT…LEES), 700–732 (GTVE…FLEE), 734–768 (KYFE…KFVK), 773–807 (KKLE…LEEE), 845–879 (FGLP…MERK), and 881–915 (GEID…FEIE). Disordered stretches follow at residues 948-969 (AAAS…QDAA) and 1003-1031 (TNAN…EDEF).

It belongs to the crooked-neck family. In terms of assembly, associated with the spliceosome.

The protein resides in the nucleus. Functionally, involved in pre-mRNA splicing and cell cycle progression. The polypeptide is Pre-mRNA-splicing factor SYF1 (SYF1) (Cryptococcus neoformans var. neoformans serotype D (strain B-3501A) (Filobasidiella neoformans)).